The sequence spans 147 residues: UPF0306 protein YhbP (147 aa).

This sequence belongs to the UPF0306 family.

The protein is UPF0306 protein YhbP of Salmonella arizonae (strain ATCC BAA-731 / CDC346-86 / RSK2980).